A 216-amino-acid polypeptide reads, in one-letter code: Acyl-homoserine-lactone synthase (216 aa).

This sequence belongs to the autoinducer synthase family.

It catalyses the reaction a fatty acyl-[ACP] + S-adenosyl-L-methionine = an N-acyl-L-homoserine lactone + S-methyl-5'-thioadenosine + holo-[ACP] + H(+). Required for the synthesis of OHHL (N-(3-oxohexanoyl)-L-homoserine lactone), an autoinducer molecule which binds to a yet uncharacterized transcriptional regulator. The protein is Acyl-homoserine-lactone synthase (eagI) of Enterobacter agglomerans (Erwinia herbicola).